A 232-amino-acid chain; its full sequence is Probable phospholipid hydroperoxide glutathione peroxidase 6, mitochondrial (232 aa).

Residues 1–54 (MLRSSIRLLYIRRTSPLLRSLSSSSSSSSSKRFDSAKPLFNSHRIISLPISTTG) constitute a mitochondrion transit peptide. Residue C105 is part of the active site.

It belongs to the glutathione peroxidase family. As to expression, expressed at a low but detectable level in leaves, stems, and flowers, but at a higher level in siliques and even higher in roots. Predominantly expressed in seeds.

It is found in the mitochondrion. The enzyme catalyses a hydroperoxy polyunsaturated fatty acid + 2 glutathione = a hydroxy polyunsaturated fatty acid + glutathione disulfide + H2O. Its function is as follows. Protects cells and enzymes from oxidative damage, by catalyzing the reduction of hydrogen peroxide, lipid peroxides and organic hydroperoxide, by glutathione. In Arabidopsis thaliana (Mouse-ear cress), this protein is Probable phospholipid hydroperoxide glutathione peroxidase 6, mitochondrial (GPX6).